Here is a 340-residue protein sequence, read N- to C-terminus: MSDALKPLIGLAADRALTRTEAETAFAALFNGEATPSQMGGLLMALRTRGETVDEYAAAAAVMRAKCNKVSAPADAMDIVGTGGDGKGTLNISTATAFVVAGAGVPVAKHGNRNLSSKSGAADALTEMGIQVMVGPKVVEKSLKEAGICFMMAPMHHPAIAHVMPTRQELGTRTIFNILGPLTNPADVKRQLTGAFSRDLIRPMAETLKQLGSEVAWLVHGSDGTDELTITGVSWVAGLSEDGNISEFEVHPEEAGLPEHPFEAIVGGTPAENAAAFRALLEGTPSAYRDAVLLNSAAALKVAGVVSSLKEGAERAAESIDSGAALGKVTAVARITSEAS.

5-phospho-alpha-D-ribose 1-diphosphate contacts are provided by residues glycine 81, 84-85 (GD), threonine 89, 91-94 (NIST), 109-117 (KHGNRNLSS), and alanine 121. An anthranilate-binding site is contributed by glycine 81. Serine 93 contacts Mg(2+). Asparagine 112 serves as a coordination point for anthranilate. Arginine 167 lines the anthranilate pocket. Residues aspartate 226 and glutamate 227 each coordinate Mg(2+).

Belongs to the anthranilate phosphoribosyltransferase family. In terms of assembly, homodimer. Mg(2+) serves as cofactor.

The enzyme catalyses N-(5-phospho-beta-D-ribosyl)anthranilate + diphosphate = 5-phospho-alpha-D-ribose 1-diphosphate + anthranilate. It participates in amino-acid biosynthesis; L-tryptophan biosynthesis; L-tryptophan from chorismate: step 2/5. Catalyzes the transfer of the phosphoribosyl group of 5-phosphorylribose-1-pyrophosphate (PRPP) to anthranilate to yield N-(5'-phosphoribosyl)-anthranilate (PRA). The polypeptide is Anthranilate phosphoribosyltransferase (Ruegeria sp. (strain TM1040) (Silicibacter sp.)).